The following is a 254-amino-acid chain: Adenosylcobinamide-GDP ribazoletransferase (254 aa).

7 helical membrane-spanning segments follow: residues 29 to 49 (LFWF…LGYF), 50 to 70 (TSLL…GIAL), 98 to 118 (IMKD…MMLL), 121 to 141 (IAIL…GVLL), 170 to 190 (AGVV…FPLL), 198 to 218 (LYAV…TGLL), and 230 to 250 (VLGA…ALSA).

Belongs to the CobS family. It depends on Mg(2+) as a cofactor.

The protein localises to the cell inner membrane. The catalysed reaction is alpha-ribazole + adenosylcob(III)inamide-GDP = adenosylcob(III)alamin + GMP + H(+). The enzyme catalyses alpha-ribazole 5'-phosphate + adenosylcob(III)inamide-GDP = adenosylcob(III)alamin 5'-phosphate + GMP + H(+). The protein operates within cofactor biosynthesis; adenosylcobalamin biosynthesis; adenosylcobalamin from cob(II)yrinate a,c-diamide: step 7/7. Functionally, joins adenosylcobinamide-GDP and alpha-ribazole to generate adenosylcobalamin (Ado-cobalamin). Also synthesizes adenosylcobalamin 5'-phosphate from adenosylcobinamide-GDP and alpha-ribazole 5'-phosphate. This is Adenosylcobinamide-GDP ribazoletransferase from Pelodictyon phaeoclathratiforme (strain DSM 5477 / BU-1).